The primary structure comprises 270 residues: Shikimate dehydrogenase (NADP(+)) (270 aa).

Shikimate-binding positions include 15-17 (SKS) and threonine 62. The active-site Proton acceptor is the lysine 66. An NADP(+)-binding site is contributed by aspartate 78. Shikimate-binding residues include asparagine 87 and aspartate 103. Residues 128–132 (GAGGA), 152–157 (NRTVDR), and leucine 213 each bind NADP(+). Tyrosine 215 lines the shikimate pocket. NADP(+) is bound at residue glycine 237.

Belongs to the shikimate dehydrogenase family. In terms of assembly, homodimer.

The enzyme catalyses shikimate + NADP(+) = 3-dehydroshikimate + NADPH + H(+). The protein operates within metabolic intermediate biosynthesis; chorismate biosynthesis; chorismate from D-erythrose 4-phosphate and phosphoenolpyruvate: step 4/7. Functionally, involved in the biosynthesis of the chorismate, which leads to the biosynthesis of aromatic amino acids. Catalyzes the reversible NADPH linked reduction of 3-dehydroshikimate (DHSA) to yield shikimate (SA). This chain is Shikimate dehydrogenase (NADP(+)), found in Halorhodospira halophila (strain DSM 244 / SL1) (Ectothiorhodospira halophila (strain DSM 244 / SL1)).